A 74-amino-acid chain; its full sequence is Major structural pilin EpdE (74 aa).

Positions M1–G12 are excised as a propeptide. Q13 is subject to Pyrrolidone carboxylic acid. Positions Q13 to L21 match the QXSXEXXXL motif.

Post-translationally, the N-terminus is cleaved by the prepilin peptidase EppA, which recognizes the class III signal sequence. In terms of processing, N-glycosylated. Glycosylated with an N-linked branched pentasaccharide glycan. May contain glycans at three sites. Glycosylation is AglB-dependent. The N-glycosylation does not occur unless the signal peptide has been cleaved first.

The protein resides in the secreted. Its subcellular location is the cell surface. It is found in the fimbrium. In terms of biological role, major component of the type IV-like pili. This Methanococcus maripaludis (strain DSM 14266 / JCM 13030 / NBRC 101832 / S2 / LL) protein is Major structural pilin EpdE.